Here is a 182-residue protein sequence, read N- to C-terminus: Pyruvoyl-dependent arginine decarboxylase (182 aa).

The residue at position 44 (S44) is a Pyruvic acid (Ser).

It belongs to the PdaD family. It depends on pyruvate as a cofactor.

It catalyses the reaction L-arginine + H(+) = agmatine + CO2. This Picrophilus torridus (strain ATCC 700027 / DSM 9790 / JCM 10055 / NBRC 100828 / KAW 2/3) protein is Pyruvoyl-dependent arginine decarboxylase.